We begin with the raw amino-acid sequence, 493 residues long: Cobyric acid synthase (493 aa).

One can recognise a GATase cobBQ-type domain in the interval 246-440 (PIDIAVIKMP…IHGVFDGVVF (195 aa)). The Nucleophile role is filled by Cys326. The active site involves His432.

Belongs to the CobB/CobQ family. CobQ subfamily.

It participates in cofactor biosynthesis; adenosylcobalamin biosynthesis. Functionally, catalyzes amidations at positions B, D, E, and G on adenosylcobyrinic A,C-diamide. NH(2) groups are provided by glutamine, and one molecule of ATP is hydrogenolyzed for each amidation. The sequence is that of Cobyric acid synthase from Clostridium botulinum (strain ATCC 19397 / Type A).